Consider the following 402-residue polypeptide: Advanced glycosylation end product-specific receptor (402 aa).

Positions 1–22 (MPAGTAARAWVLVLALWGAVAG) are cleaved as a signal peptide. One can recognise an Ig-like V-type domain in the interval 23 to 109 (GQNITARIGE…ATNRRGKEVK (87 aa)). Residues 23–340 (GQNITARIGE…VGESGLGTLA (318 aa)) are Extracellular-facing. N-linked (GlcNAc...) asparagine glycosylation is found at N25 and N80. 2 cysteine pairs are disulfide-bonded: C38-C98 and C143-C206. 2 Ig-like C2-type domains span residues 123 to 219 (PEIV…RPLN) and 233 to 315 (PEGI…PPVS). The disordered stretch occupies residues 295 to 332 (GTYSCVATHPSHGPQESPPVSIRVTETGDEGPAEGSVG). A helical transmembrane segment spans residues 341–361 (LALGILGGLGVVALLVGAILW). The Cytoplasmic portion of the chain corresponds to 362 to 402 (RKRQPRREERKAPESQEDEEERAELNQSEEAEMPENGAGGP). A disordered region spans residues 365-402 (QPRREERKAPESQEDEEERAELNQSEEAEMPENGAGGP). Phosphoserine; by ATM is present on residues S376 and S389. Acidic residues predominate over residues 376–394 (SQEDEEERAELNQSEEAEM).

Constitutive homodimer; disulfide-linked. Forms homooligomers. Interacts with S100A1 and APP. Interacts with S100B, S100A12 and S100A14. Interacts with TIRAP. Interacts with HMGB1. Interacts with LGP2; this interaction plays an important role in AGER-mediated pro-inflammatory responses and cytokine release. Interacts with double-strand break repair protein MRE11 which is a core component of the MRN complex; the interaction enhances MRE11 endonuclease activity and promotes DNA repair. Interacts with the MCM2-7 complex via interaction with complex member MCM2; the interaction is increased following DNA replication stress and stabilizes the MCM2-7 complex at replication forks. In terms of processing, phosphorylated on its cytoplasmic domain by PKCzeta/PRKCZ upon ligand binding. Phosphorylated by ATM following DNA damage. Targeted by the ubiquitin E3 ligase subunit FBXO10 to mediate its ubiquitination and degradation. As to expression, isoform 1: Expressed at higher levels in the coronary arterioles in type 2 diabetic mice (at protein level). Endothelial cells. Expressed in lung, kidney, brain and heart. Most prevalent isoform with the highest level in heart. Isoform 2: Expressed in brain, lung, kidney and small intestine with the highest level in lung. Expressed in brain, lung, kidney and small intestine with the highest level in small intestine (at protein level). Detected in neurons of the cerebrum, bronchial epithelium, endothelial cells, tubular cells of kidney and epithelial cells of small intestine (at protein level). Expression is increased in the kidney of diabetic wild-type mice (at protein level), but not in the other tissues. Expressed only in kidney. Expression is increased in the kidney of diabetic mice. Isoform 3: Expressed in lung, kidney and heart. The second most prevalent isoform with the highest level in lung. Not expressed in brain. Isoform 4: Expressed at very low level in lung only. Isoform 5: Expressed at very low level in lung only. Isoform 6: Expressed at very low level in lung only. Isoform 7: Expressed at very low level in heart only. Isoform 8: Expressed at very low level in lung only. Isoform 9: Expressed at very low level in heart only. Isoform 10: Expressed in lung, brain, heart and kidney with a very high level in kidney. Isoform 11: Expressed in brain, kidney and heart. Not expressed in lung. Isoform 12: Expressed at very low level in lung and kidney. Isoform 13: Expressed at very low level in lung only.

The protein localises to the cell membrane. Its subcellular location is the cell projection. The protein resides in the phagocytic cup. It localises to the early endosome. It is found in the nucleus. The protein localises to the secreted. In terms of biological role, cell surface pattern recognition receptor that senses endogenous stress signals with a broad ligand repertoire including advanced glycation end products, S100 proteins, high-mobility group box 1 protein/HMGB1, amyloid beta/APP oligomers, nucleic acids, histones, phospholipids and glycosaminoglycans. Advanced glycosylation end products are nonenzymatically glycosylated proteins which accumulate in vascular tissue in aging and at an accelerated rate in diabetes. These ligands accumulate at inflammatory sites during the pathogenesis of various diseases including diabetes, vascular complications, neurodegenerative disorders and cancers, and RAGE transduces their binding into pro-inflammatory responses. Upon ligand binding, uses TIRAP and MYD88 as adapters to transduce the signal ultimately leading to the induction of inflammatory cytokines IL6, IL8 and TNFalpha through activation of NF-kappa-B. Interaction with S100A12 on endothelium, mononuclear phagocytes, and lymphocytes triggers cellular activation, with generation of key pro-inflammatory mediators. Interaction with S100B after myocardial infarction may play a role in myocyte apoptosis by activating ERK1/2 and p53/TP53 signaling. Contributes to the translocation of amyloid-beta peptide (ABPP) across the cell membrane from the extracellular to the intracellular space in cortical neurons. ABPP-initiated RAGE signaling, especially stimulation of p38 mitogen-activated protein kinase (MAPK), has the capacity to drive a transport system delivering ABPP as a complex with RAGE to the intraneuronal space. Participates in endothelial albumin transcytosis together with HMGB1 through the RAGE/SRC/Caveolin-1 pathway, leading to endothelial hyperpermeability. Mediates the loading of HMGB1 in extracellular vesicles (EVs) that shuttle HMGB1 to hepatocytes by transferrin-mediated endocytosis and subsequently promote hepatocyte pyroptosis by activating the NLRP3 inflammasome. Binds to DNA and promotes extracellular hypomethylated DNA (CpG DNA) uptake by cells via the endosomal route to activate inflammatory responses. Mediates phagocytosis by non-professional phagocytes (NPP) and this is enhanced by binding to ligands including RNA, DNA, HMGB1 and histones. Promotes NPP-mediated phagocytosis of Saccharomyces cerevisiae spores by binding to RNA attached to the spore wall. Also promotes NPP-mediated phagocytosis of apoptotic cells. Following DNA damage, recruited to DNA double-strand break sites where it colocalizes with the MRN repair complex via interaction with double-strand break repair protein MRE11. Enhances the endonuclease activity of MRE11, promoting the end resection of damaged DNA. Promotes DNA damage repair in trophoblasts which enhances trophoblast invasion and contributes to placental development and maintenance. Protects cells from DNA replication stress by localizing to damaged replication forks where it stabilizes the MCM2-7 complex and promotes faithful progression of the replication fork. Functionally, is able to advanced glycosylation end product (AGE)-induce nuclear factor NF-kappa-B activation. Its function is as follows. Down-regulates receptor for advanced glycosylation end products (RAGE)-ligand induced signaling through various MAPK pathways including ERK1/2, p38 and SAPK/JNK. Significantly affects tumor cell properties through decreasing cell migration, invasion, adhesion and proliferation, and increasing cellular apoptosis. Exhibits drastic inhibition on tumorigenesis in vitro. The polypeptide is Advanced glycosylation end product-specific receptor (Ager) (Mus musculus (Mouse)).